We begin with the raw amino-acid sequence, 347 residues long: Phenylalanine--tRNA ligase alpha subunit (347 aa).

Glutamate 265 is a Mg(2+) binding site.

This sequence belongs to the class-II aminoacyl-tRNA synthetase family. Phe-tRNA synthetase alpha subunit type 1 subfamily. In terms of assembly, tetramer of two alpha and two beta subunits. Mg(2+) is required as a cofactor.

It localises to the cytoplasm. It catalyses the reaction tRNA(Phe) + L-phenylalanine + ATP = L-phenylalanyl-tRNA(Phe) + AMP + diphosphate + H(+). In Wolbachia pipientis wMel, this protein is Phenylalanine--tRNA ligase alpha subunit.